The primary structure comprises 986 residues: P3N-PIPO polyprotein (986 aa).

The Peptidase S30 domain maps to 141–284 (KLTEGQMNHL…QSILNSMIQF (144 aa)). Catalysis depends on for P1 proteinase activity residues H192, D201, and S235. Positions 334–337 (KITC) match the Involved in interaction with stylet and aphid transmission motif. The Involved in virions binding and aphid transmission motif lies at 592–594 (PTK). Residues 618-740 (LYIAKQGYCY…ESDIKHYRVG (123 aa)) form the Peptidase C6 domain. Catalysis depends on for helper component proteinase activity residues C626 and H699.

The protein belongs to the potyviridae P3N-PIPO polyprotein family. In terms of assembly, interacts (via PIPO domain) with host PCaP1 protein; this interaction may help to anchor the movement complex to the plasma membrane from which the complex could move to the plasmodesmata. Potyviral RNA is expressed as two polyproteins which undergo post-translational proteolytic processing. Genome polyprotein is processed by NIa-pro, P1 and HC-pro proteinases resulting in the production of at least ten individual proteins. P3N-PIPO is cleaved by P1 and HC-pro proteinases resulting in the production of three individual proteins. The P1 proteinase and the HC-pro cleave only their respective C-termini autocatalytically.

It is found in the host cell junction. Its subcellular location is the host plasmodesma. It catalyses the reaction Hydrolyzes a Gly-|-Gly bond at its own C-terminus, commonly in the sequence -Tyr-Xaa-Val-Gly-|-Gly, in the processing of the potyviral polyprotein.. Required for aphid transmission and also has proteolytic activity. Only cleaves a Gly-Gly dipeptide at its own C-terminus. Interacts with virions and aphid stylets. Acts as a suppressor of RNA-mediated gene silencing, also known as post-transcriptional gene silencing (PTGS), a mechanism of plant viral defense that limits the accumulation of viral RNAs. May have RNA-binding activity. Its function is as follows. Allows efficient cell to cell propagation, by bypassing the host cell wall barrier. Transports viral genome to neighboring plant cells directly through plasmosdesmata, without any budding. In Potato virus Y (strain N) (PVY), this protein is P3N-PIPO polyprotein.